The following is a 108-amino-acid chain: Protein RnfH (108 aa).

The interval alanine 86–alanine 108 is disordered.

The protein belongs to the UPF0125 (RnfH) family.

This chain is Protein RnfH, found in Pseudoalteromonas atlantica (strain T6c / ATCC BAA-1087).